The chain runs to 428 residues: C4-dicarboxylate transport protein (428 aa).

8 consecutive transmembrane segments (helical) span residues 8–28 (VLYV…HYYP), 44–64 (LIKM…IAGM), 78–98 (LLYF…ATHI), 148–168 (GEIL…AHLG), 184–204 (VLFG…FGAM), 222–242 (LIGT…GAIA), 307–327 (IYMT…LTWM), and 355–375 (AATL…ILGI).

This sequence belongs to the dicarboxylate/amino acid:cation symporter (DAACS) (TC 2.A.23) family.

It is found in the cell inner membrane. Responsible for the transport of dicarboxylates such as succinate, fumarate, and malate from the periplasm across the membrane. The polypeptide is C4-dicarboxylate transport protein (Burkholderia mallei (strain ATCC 23344)).